The chain runs to 906 residues: Translation initiation factor IF-2 (906 aa).

Disordered regions lie at residues 94–125, 165–232, and 270–321; these read APEK…PETA, ESEA…TGKK, and RQEQ…SSEV. Composition is skewed to basic and acidic residues over residues 165 to 176, 222 to 232, and 270 to 284; these read ESEAEKGTEIEK, GPAEARETGKK, and RQEQ…KREA. Basic residues predominate over residues 299-313; sequence QQRRSLKRGGKRKKY. Residues 405–574 enclose the tr-type G domain; sequence ERPPVITIMG…LLQAEMMELK (170 aa). Positions 414 to 421 are G1; sequence GHVDHGKT. 414 to 421 is a GTP binding site; the sequence is GHVDHGKT. Positions 439–443 are G2; the sequence is GITQH. The segment at 460–463 is G3; sequence DTPG. GTP-binding positions include 460–464 and 514–517; these read DTPGH and NKMD. The segment at 514–517 is G4; it reads NKMD. The tract at residues 550–552 is G5; sequence SAH.

It belongs to the TRAFAC class translation factor GTPase superfamily. Classic translation factor GTPase family. IF-2 subfamily.

Its subcellular location is the cytoplasm. In terms of biological role, one of the essential components for the initiation of protein synthesis. Protects formylmethionyl-tRNA from spontaneous hydrolysis and promotes its binding to the 30S ribosomal subunits. Also involved in the hydrolysis of GTP during the formation of the 70S ribosomal complex. This is Translation initiation factor IF-2 from Sulfurovum sp. (strain NBC37-1).